Reading from the N-terminus, the 524-residue chain is Cytochrome c nitrite reductase subunit NrfA (524 aa).

The signal sequence occupies residues Met-1 to Thr-24. An interaction with NrfH region spans residues Asp-29–Tyr-39. Positions 78, 117, and 118 each coordinate Ca(2+). Heme-binding residues include His-121, Cys-147, Cys-150, Lys-151, Cys-187, Cys-190, and His-191. Residues Arg-221–Asn-222 form an interaction with NrfH region. Residues Cys-229, Cys-232, and His-233 each contribute to the heme site. Ca(2+)-binding residues include Glu-235, Tyr-236, Lys-295, and Gln-297. The heme site is built by His-309, Cys-316, Cys-319, His-320, His-335, Cys-349, Cys-352, His-353, and His-434. Residues Asp-318–Lys-331 are interaction with NrfH. The segment at Gln-351–Asp-355 is interaction with NrfH.

It belongs to the cytochrome c-552 family. In terms of assembly, component of the NrfHA cytochrome c nitrite reductase complex composed of 4 NrfA catalytic subunits and 2 NrfH quinone-binding subunits. NrfA homodimer interacts with NrfH. The cofactor is Ca(2+). Heme serves as cofactor.

It localises to the cell inner membrane. It catalyses the reaction 6 Fe(III)-[cytochrome c] + NH4(+) + 2 H2O = 6 Fe(II)-[cytochrome c] + nitrite + 8 H(+). Functionally, catalytic subunit of the cytochrome c nitrite reductase holocomplex NrfHA. Has both nitrite and sulfite reductase activities. Catalyzes the reduction of nitrite to ammonia, consuming six electrons acquired by the electron donor subunit NrfH from the menaquinone pool, in an anaerobic respiratory process of nitrite. The other biological function of the NrfHA holocomplex is to detoxify nitrite. This function is essential for the survival of this organism as it enables it to overcome inhibition by nitrite, which is produced by other organisms living in the same environment. This is Cytochrome c nitrite reductase subunit NrfA from Nitratidesulfovibrio vulgaris (strain ATCC 29579 / DSM 644 / CCUG 34227 / NCIMB 8303 / VKM B-1760 / Hildenborough) (Desulfovibrio vulgaris).